Here is a 129-residue protein sequence, read N- to C-terminus: Thyroid hormone receptor alpha (129 aa).

The 104-residue stretch at 26 to 129 (AEWELIRMVT…EIMSLRAAVR (104 aa)) folds into the NR LBD domain. Arginine 91 serves as a coordination point for 3,3',5-triiodo-L-thyronine.

It belongs to the nuclear hormone receptor family. NR1 subfamily.

The protein localises to the nucleus. Its function is as follows. Nuclear hormone receptor that can act as a repressor or activator of transcription. High affinity receptor for thyroid hormones, including triiodothyronine and thyroxine. The polypeptide is Thyroid hormone receptor alpha (thra1) (Sparus aurata (Gilthead sea bream)).